A 266-amino-acid chain; its full sequence is Protein crossbronx-like (266 aa).

Residues 15-178 enclose the UBC core domain; it reads KQGYKILAEY…IQELAISSRR (164 aa). Residues 216–266 are disordered; sequence EATCEDDSPPAELLGHIDSSRQLDEDEANQRGKLQAATTDLQHGARCSVAQ.

The protein belongs to the ubiquitin-conjugating enzyme family. FTS subfamily.

The polypeptide is Protein crossbronx-like (Drosophila ananassae (Fruit fly)).